Consider the following 1117-residue polypeptide: Protein rliB (1117 aa).

An N-terminal signal peptide occupies residues 1-23; it reads MKNINNKILKIFILFLAICSVKS. Residues N136, N195, N279, and N318 are each glycosylated (N-linked (GlcNAc...) asparagine). Positions 266–392 constitute a G8 domain; the sequence is STWSNNLVPQ…YHNSWTKLAS (127 aa). 2 PbH1 repeats span residues 522–544 and 545–567; these read VQKSYISDCVVTKSYYRCYTIHG and TNNLTLTRNVAFDVNGHCYYLED. N-linked (GlcNAc...) asparagine glycans are attached at residues N547 and N605. One copy of the PbH1 3 repeat lies at 621–642; that stretch reads NAYNTIIGNSASGGWAGFSFPN. Residues N728, N845, N1030, N1044, N1091, and N1107 are each glycosylated (N-linked (GlcNAc...) asparagine).

It belongs to the comF family.

It localises to the secreted. The protein is Protein rliB (rliB) of Dictyostelium discoideum (Social amoeba).